The chain runs to 343 residues: Heat-inducible transcription repressor HrcA (343 aa).

Belongs to the HrcA family.

Negative regulator of class I heat shock genes (grpE-dnaK-dnaJ and groELS operons). Prevents heat-shock induction of these operons. This chain is Heat-inducible transcription repressor HrcA, found in Mycobacterium leprae (strain Br4923).